Consider the following 378-residue polypeptide: UDP-N-acetylglucosamine--N-acetylmuramyl-(pentapeptide) pyrophosphoryl-undecaprenol N-acetylglucosamine transferase (378 aa).

Residues 13-15, Asn-124, Arg-165, Ser-193, and Gln-294 contribute to the UDP-N-acetyl-alpha-D-glucosamine site; that span reads TGG.

The protein belongs to the glycosyltransferase 28 family. MurG subfamily.

The protein localises to the cell inner membrane. It carries out the reaction di-trans,octa-cis-undecaprenyl diphospho-N-acetyl-alpha-D-muramoyl-L-alanyl-D-glutamyl-meso-2,6-diaminopimeloyl-D-alanyl-D-alanine + UDP-N-acetyl-alpha-D-glucosamine = di-trans,octa-cis-undecaprenyl diphospho-[N-acetyl-alpha-D-glucosaminyl-(1-&gt;4)]-N-acetyl-alpha-D-muramoyl-L-alanyl-D-glutamyl-meso-2,6-diaminopimeloyl-D-alanyl-D-alanine + UDP + H(+). Its pathway is cell wall biogenesis; peptidoglycan biosynthesis. In terms of biological role, cell wall formation. Catalyzes the transfer of a GlcNAc subunit on undecaprenyl-pyrophosphoryl-MurNAc-pentapeptide (lipid intermediate I) to form undecaprenyl-pyrophosphoryl-MurNAc-(pentapeptide)GlcNAc (lipid intermediate II). This is UDP-N-acetylglucosamine--N-acetylmuramyl-(pentapeptide) pyrophosphoryl-undecaprenol N-acetylglucosamine transferase from Agrobacterium fabrum (strain C58 / ATCC 33970) (Agrobacterium tumefaciens (strain C58)).